A 1489-amino-acid polypeptide reads, in one-letter code: Chromosome partition protein MukB (1489 aa).

34-41 is an ATP binding site; the sequence is GGNGAGKS. Coiled-coil stretches lie at residues 326–418, 444–472, 509–602, 780–805, 835–919, 977–1116, and 1209–1266; these read LEAD…QYNQ, LETFQAKEQEATEKLLSLEQKMSVAQTAH, RHLA…QRAP, RAARENRIESLHAEREGLSERFATLS, EAEI…GNQL, EMLS…AKAG, and VEAI…QNVS. The interval 666 to 783 is flexible hinge; it reads PGGSEDSRLN…TVPIFGRAAR (118 aa).

It belongs to the SMC family. MukB subfamily. As to quaternary structure, homodimerization via its hinge domain. Binds to DNA via its C-terminal region. Interacts, and probably forms a ternary complex, with MukE and MukF via its C-terminal region. The complex formation is stimulated by calcium or magnesium. Interacts with tubulin-related protein FtsZ.

It localises to the cytoplasm. It is found in the nucleoid. Functionally, plays a central role in chromosome condensation, segregation and cell cycle progression. Functions as a homodimer, which is essential for chromosome partition. Involved in negative DNA supercoiling in vivo, and by this means organize and compact chromosomes. May achieve or facilitate chromosome segregation by condensation DNA from both sides of a centrally located replisome during cell division. This is Chromosome partition protein MukB from Citrobacter koseri (strain ATCC BAA-895 / CDC 4225-83 / SGSC4696).